The primary structure comprises 453 residues: CAAX prenyl protease 1 (453 aa).

Over 1 to 12 the chain is Lumenal; the sequence is MFDLKTILDHPN. The helical transmembrane segment at 13-33 threads the bilayer; it reads IPWKLIISGFSIAQFSFESYL. At 34 to 89 the chain is on the cytoplasmic side; the sequence is TYRQYQKLSETKLPPVLEDEIDDETFHKSRNYSRAKAKFSIFGDVYNLAQKLVFIK. Residues 90-110 form a helical membrane-spanning segment; it reads YDLFPKIWHMAVSLLNAVLPV. Residues 111-121 are Lumenal-facing; that stretch reads RFHMVSTVAQS. Residues 122–142 traverse the membrane as a helical segment; the sequence is LCFLGLLSSLSTLVDLPLSYY. Topologically, residues 143–167 are cytoplasmic; sequence SHFVLEEKFGFNKLTVQLWITDMIK. A helical membrane pass occupies residues 168 to 188; that stretch reads SLTLAYAIGGPILYLFLKIFD. Residues 189-197 lie on the Lumenal side of the membrane; the sequence is KFPTDFLWY. The helical transmembrane segment at 198–218 threads the bilayer; it reads IMVFLFVVQILAMTIIPVFIM. Residues 219–306 are Cytoplasmic-facing; sequence PMFNKFTPLE…HEIGHWQKNH (88 aa). Histidine 297 is a Zn(2+) binding site. The active site involves glutamate 298. Histidine 301 contacts Zn(2+). Residues 307 to 327 form a helical membrane-spanning segment; the sequence is IVNMVIFSQLHTFLIFSLFTS. At 328–357 the chain is on the lumenal side; sequence IYRNTSFYNTFGFFLEKSTGSFVDPVITKE. The chain crosses the membrane as a helical span at residues 358–378; that stretch reads FPIIIGFMLFNDLLTPLECAM. Residues 379–453 lie on the Cytoplasmic side of the membrane; sequence QFVMSLISRT…LDYVSEKKKN (75 aa). Residue glutamate 390 participates in Zn(2+) binding. Catalysis depends on aspartate 394, which acts as the Proton donor.

Belongs to the peptidase M48A family. Zn(2+) serves as cofactor.

Its subcellular location is the endoplasmic reticulum membrane. It catalyses the reaction Hydrolyzes the peptide bond -P2-(S-farnesyl or geranylgeranyl)C-P1'-P2'-P3'-COOH where P1' and P2' are amino acids with aliphatic side chains and P3' is any C-terminal residue.. Functionally, proteolytically removes the C-terminal three residues of farnesylated A-factor mating pheromone. Also acts to cleave the N-terminal extension of the pheromone. Does not act on Ras. This Saccharomyces cerevisiae (strain ATCC 204508 / S288c) (Baker's yeast) protein is CAAX prenyl protease 1 (STE24).